A 351-amino-acid polypeptide reads, in one-letter code: Ion-translocating oxidoreductase complex subunit D (351 aa).

4 consecutive transmembrane segments (helical) span residues 18–38, 40–60, 87–107, and 121–141; these read IMLL…YFFG, GSLI…GAVL, LPPL…IVIA, and PAMV…TSWL. At Thr-185 the chain carries FMN phosphoryl threonine. The next 5 membrane-spanning stretches (helical) occupy residues 211-231, 241-261, 264-284, 298-318, and 320-340; these read VLAG…GLLL, IPVS…MIAP, FASP…FFIA, LIFG…GGYP, and GVAF…HYTQ.

It belongs to the NqrB/RnfD family. As to quaternary structure, the complex is composed of six subunits: RnfA, RnfB, RnfC, RnfD, RnfE and RnfG. FMN is required as a cofactor.

The protein localises to the cell inner membrane. Part of a membrane-bound complex that couples electron transfer with translocation of ions across the membrane. This Yersinia pseudotuberculosis serotype O:1b (strain IP 31758) protein is Ion-translocating oxidoreductase complex subunit D.